The primary structure comprises 109 residues: Small ribosomal subunit protein uS17 (109 aa).

The protein belongs to the universal ribosomal protein uS17 family. As to quaternary structure, part of the 30S ribosomal subunit.

Functionally, one of the primary rRNA binding proteins, it binds specifically to the 5'-end of 16S ribosomal RNA. This is Small ribosomal subunit protein uS17 from Thermoplasma acidophilum (strain ATCC 25905 / DSM 1728 / JCM 9062 / NBRC 15155 / AMRC-C165).